We begin with the raw amino-acid sequence, 101 residues long: Small ribosomal subunit protein uS14 (101 aa).

Belongs to the universal ribosomal protein uS14 family. Part of the 30S ribosomal subunit. Contacts proteins S3 and S10.

Binds 16S rRNA, required for the assembly of 30S particles and may also be responsible for determining the conformation of the 16S rRNA at the A site. This is Small ribosomal subunit protein uS14 from Nitrosospira multiformis (strain ATCC 25196 / NCIMB 11849 / C 71).